The primary structure comprises 90 residues: Putative septation protein SpoVG (90 aa).

Belongs to the SpoVG family.

Its function is as follows. Could be involved in septation. The protein is Putative septation protein SpoVG of Clostridium perfringens (strain SM101 / Type A).